The sequence spans 757 residues: Mitofusin-2 (757 aa).

At 1–604 (MSLLFSRCNS…TQEELMVSMV (604 aa)) the chain is on the cytoplasmic side. The interval 30–94 (KHFVTAKKKI…VRGISEVLAR (65 aa)) is part of a helix bundle domain, formed by helices from N-terminal and C-terminal regions. Residues 93–342 (ARRHMKVAFF…VRMFEFQNFE (250 aa)) form the Dynamin-type G domain. Positions 103–110 (GRTSNGKS) are G1 motif. Position 106–111 (106–111 (SNGKST)) interacts with GTP. T111 carries the phosphothreonine; by PINK1 modification. A G2 motif region spans residues 129 to 130 (TT). A G3 motif region spans residues 199-202 (DSPG). 258–261 (NRWD) contributes to the GTP binding site. The tract at residues 258 to 261 (NRWD) is G4 motif. E288 is a region of interest (G5 motif). 2 residues coordinate GTP: S305 and K307. Residues 359-385 (EQHTVRAKQIAEAVRLIMDSLHIAAQE) form a part of a helix bundle domain, formed by helices from N-terminal and C-terminal regions region. The stretch at 406–435 (KQLELLAQDYKLRIKQMTEEVERQVSTAMA) forms a coiled coil. S442 carries the post-translational modification Phosphoserine; by PINK1. Residues 605 to 625 (TGLASLTSRTSMGILVVGGVV) form a helical membrane-spanning segment. W626 is a topological domain (mitochondrial intermembrane). Residues 627–647 (KAVGWRLIALSFGLYGLLYVY) form a helical membrane-spanning segment. Topologically, residues 648–757 (ERLTWTTRAK…FIHQYLQPSR (110 aa)) are cytoplasmic. A coiled-coil region spans residues 696–738 (FAHLCQQVDITRDNLEQEIAAMNKKVEALDSLQSKAKLLRNKA). Residues 722–753 (EALDSLQSKAKLLRNKAGWLDSELNMFIHQYL) are part of a helix bundle domain, formed by helices from N-terminal and C-terminal regions.

The protein belongs to the TRAFAC class dynamin-like GTPase superfamily. Dynamin/Fzo/YdjA family. Mitofusin subfamily. As to quaternary structure, forms homomultimers and heteromultimers with MFN1. Oligomerization is essential for mitochondrion fusion. Interacts with VAT1. Interacts with STOML2; may form heterooligomers. Interacts (phosphorylated) with PRKN. Interacts with EIF2AK3. Interacts with THG1L; THG1L probably functions as a guanyl-nucleotide exchange factor/GEF, activating MFN2. Phosphorylated by PINK1. Post-translationally, ubiquitinated by non-degradative ubiquitin by PRKN, promoting mitochondrial fusion; deubiquitination by USP30 inhibits mitochondrial fusion. Ubiquitinated by HUWE1 when dietary stearate (C18:0) levels are low; ubiquitination inhibits mitochondrial fusion. In terms of tissue distribution, ubiquitous. In brain, it is more expressed than MFN1, while it is expressed at a weaker level than MFN1 in heart and testis. Expressed at high level in elongating spermatids of seminiferous tubules. Expression is markedly down-regulated in highly proliferative vascular smooth muscle cells (VSMCs) from the genetic hypertensive animal model SHR, as well as in balloon-injured Wistar Kyoto arteries.

Its subcellular location is the mitochondrion outer membrane. The enzyme catalyses GTP + H2O = GDP + phosphate + H(+). Functionally, mitochondrial outer membrane GTPase that mediates mitochondrial clustering and fusion. Mitochondria are highly dynamic organelles, and their morphology is determined by the equilibrium between mitochondrial fusion and fission events. Overexpression induces the formation of mitochondrial networks. Membrane clustering requires GTPase activity and may involve a major rearrangement of the coiled coil domains. Plays a central role in mitochondrial metabolism and may be associated with obesity and/or apoptosis processes. Plays an important role in the regulation of vascular smooth muscle cell proliferation. Involved in the clearance of damaged mitochondria via selective autophagy (mitophagy). Is required for PRKN recruitment to dysfunctional mitochondria. Involved in the control of unfolded protein response (UPR) upon ER stress including activation of apoptosis and autophagy during ER stress. Acts as an upstream regulator of EIF2AK3 and suppresses EIF2AK3 activation under basal conditions. The protein is Mitofusin-2 (Mfn2) of Rattus norvegicus (Rat).